The primary structure comprises 417 residues: Serine/threonine-protein kinase PkaB (417 aa).

Positions 9 to 270 (YTAHQILGRG…ELSARLRELL (262 aa)) constitute a Protein kinase domain. ATP-binding positions include 15–23 (LGRGSAGTV) and K36. Catalysis depends on D130, which acts as the Proton acceptor. Disordered stretches follow at residues 279–371 (LDVD…RAAT) and 395–417 (LATG…PAAP). The span at 280–293 (DVDEPDAEQPEDAP) shows a compositional bias: acidic residues. Low complexity-rich tracts occupy residues 294–308 (DASA…STAE) and 349–368 (GTAR…ARNR). Residues 408 to 417 (DTRNSAPAAP) are compositionally biased toward polar residues.

Belongs to the protein kinase superfamily. Ser/Thr protein kinase family. Autophosphorylated mainly at Thr.

The enzyme catalyses L-seryl-[protein] + ATP = O-phospho-L-seryl-[protein] + ADP + H(+). It catalyses the reaction L-threonyl-[protein] + ATP = O-phospho-L-threonyl-[protein] + ADP + H(+). This is Serine/threonine-protein kinase PkaB (pkaB) from Streptomyces coelicolor (strain ATCC BAA-471 / A3(2) / M145).